Consider the following 335-residue polypeptide: UPF0284 protein TON_0688 (335 aa).

The protein belongs to the UPF0284 family.

The polypeptide is UPF0284 protein TON_0688 (Thermococcus onnurineus (strain NA1)).